A 154-amino-acid chain; its full sequence is Endoribonuclease YbeY (154 aa).

Residues H114, H118, and H124 each coordinate Zn(2+).

Belongs to the endoribonuclease YbeY family. Zn(2+) is required as a cofactor.

The protein localises to the cytoplasm. Functionally, single strand-specific metallo-endoribonuclease involved in late-stage 70S ribosome quality control and in maturation of the 3' terminus of the 16S rRNA. This chain is Endoribonuclease YbeY, found in Marinomonas sp. (strain MWYL1).